The sequence spans 1059 residues: Tyrosine-protein kinase-like otk (1059 aa).

A signal peptide spans 1–23 (MDMLMMWSICLFVCIFMAPFSCG). At 24–597 (SGSSSRFIQV…GDGGFLATRA (574 aa)) the chain is on the extracellular side. 5 Ig-like C2-type domains span residues 28-112 (SRFI…REAS), 113-202 (PTAK…RVMS), 258-377 (PEGL…LAIN), 380-475 (PGIL…VSIN), and 480-570 (PKFS…AVLT). Asn42 carries an N-linked (GlcNAc...) asparagine glycan. 4 cysteine pairs are disulfide-bonded: Cys49–Cys99, Cys141–Cys191, Cys283–Cys366, and Cys411–Cys459. 7 N-linked (GlcNAc...) asparagine glycosylation sites follow: Asn348, Asn429, Asn441, Asn456, Asn469, Asn524, and Asn536. A disulfide bridge connects residues Cys502 and Cys554. The helical transmembrane segment at 598 to 618 (VLITMTVALAYIVLVVGLMLW) threads the bilayer. At 619–1059 (CRYRRQARKA…ALSKAMQNSE (441 aa)) the chain is on the cytoplasmic side. The tract at residues 639–695 (GGEQAGGEGSTSGNPKASEQEPCLGKQQRNGRNGKSKSNGDPQKSDDTACSQQSRAS) is disordered. Residues 665–693 (QQRNGRNGKSKSNGDPQKSDDTACSQQSR) show a composition bias toward polar residues. Position 698 is a phosphoserine (Ser698). The region spanning 712 to 1055 (LSELIQIGRG…QLGAALSKAM (344 aa)) is the Protein kinase; inactive domain. A disordered region spans residues 739 to 781 (AQANDKDSDNDKQHSNSENGSGGSSGSTTLSTLNEKRRSKTSM). Over residues 742–753 (NDKDSDNDKQHS) the composition is skewed to basic and acidic residues.

The protein belongs to the protein kinase superfamily. Tyr protein kinase family. Insulin receptor subfamily. As to quaternary structure, interacts with plexA; component of a receptor complex that mediates the repulsive signaling in response to Semaphorin ligands.

Its subcellular location is the cell membrane. In terms of biological role, acts as a calcium-dependent, homophilic cell adhesion molecule that regulates neural recognition during the development of the nervous system. Component of the repulsive Plexin signaling response to regulate motor axon guidance at the embryonic stage. Also component of a receptor complex that is required in the adult visual system to innervate the lamina layer; specific targeting of R1-R6 axons. This Drosophila willistoni (Fruit fly) protein is Tyrosine-protein kinase-like otk.